We begin with the raw amino-acid sequence, 689 residues long: Elongation factor G (689 aa).

One can recognise a tr-type G domain in the interval 9–283; the sequence is AKFRNIGIMA…AIIEFMPSPL (275 aa). GTP contacts are provided by residues 18–25, 82–86, and 136–139; these read AHIDAGKT, DTPGH, and NKMD.

The protein belongs to the TRAFAC class translation factor GTPase superfamily. Classic translation factor GTPase family. EF-G/EF-2 subfamily.

The protein localises to the cytoplasm. Catalyzes the GTP-dependent ribosomal translocation step during translation elongation. During this step, the ribosome changes from the pre-translocational (PRE) to the post-translocational (POST) state as the newly formed A-site-bound peptidyl-tRNA and P-site-bound deacylated tRNA move to the P and E sites, respectively. Catalyzes the coordinated movement of the two tRNA molecules, the mRNA and conformational changes in the ribosome. The chain is Elongation factor G from Clostridium botulinum (strain ATCC 19397 / Type A).